A 72-amino-acid polypeptide reads, in one-letter code: UPF0154 protein LBA1278 (72 aa).

A helical membrane pass occupies residues 3-23 (LGLAIFLIIIALLVGATAGFY).

It belongs to the UPF0154 family.

It is found in the cell membrane. The chain is UPF0154 protein LBA1278 from Lactobacillus acidophilus (strain ATCC 700396 / NCK56 / N2 / NCFM).